We begin with the raw amino-acid sequence, 347 residues long: Olfactory receptor 6J1 (347 aa).

Over 1-24 (MGNWTAAVTEFVLLGFSLSREVEL) the chain is Extracellular. N-linked (GlcNAc...) asparagine glycosylation occurs at asparagine 3. The helical transmembrane segment at 25–45 (LLLVLLLPTFLLTLLGNLLII) threads the bilayer. The Cytoplasmic portion of the chain corresponds to 46–53 (STVLSCSR). Residues 54-74 (LHTPMYFFLCNLSILDILFTS) traverse the membrane as a helical segment. Over 75 to 98 (VISPKVLANLGSRDKTISFAGCIT) the chain is Extracellular. A disulfide bond links cysteine 96 and cysteine 188. A helical transmembrane segment spans residues 99 to 119 (QCYFYFFLGTVEFLLLTVMSY). The Cytoplasmic segment spans residues 120 to 138 (DRYATICCPLRYTTIMRPS). Residues 139-159 (VCIGTVVFSWVGGFLSVLFPT) form a helical membrane-spanning segment. At 160–196 (ILISQLPFCGSNIINHFFCDSGPLLALACADTTAIEL) the chain is on the extracellular side. A helical membrane pass occupies residues 197 to 216 (MDFMLSSMVILCCIVLVAYS). Residues 217-236 (YTYIILTIVRIPSASGRKKA) are Cytoplasmic-facing. A helical membrane pass occupies residues 237-257 (FNTCASHLTIVIISSGITVFI). Residues 258–270 (YVTPSQKEYLEIN) are Extracellular-facing. The chain crosses the membrane as a helical span at residues 271–291 (KIPLVLSSVVTPFLNPFIYTL). At 292 to 347 (RNDTVQGVLRDVWVRVRGVFEKRMRAVLRSRLSSNKDHQGRACSSPPCVYSVKLQC) the chain is on the cytoplasmic side.

It belongs to the G-protein coupled receptor 1 family.

It localises to the cell membrane. Its function is as follows. Odorant receptor. The sequence is that of Olfactory receptor 6J1 (OR6J1) from Homo sapiens (Human).